The primary structure comprises 230 residues: uncharacterized protein (230 aa).

A helical membrane pass occupies residues 7–23 (LFTASILSLGYLVFICG). Residues 27-230 (KPKPTASTES…VKTEGTLKKN (204 aa)) are disordered. A compositionally biased stretch (low complexity) spans 50–59 (AVPQKPAAPA). The span at 60 to 83 (AEEKAPVDPKDPKSKDVDEAKKPD) shows a compositional bias: basic and acidic residues. Over residues 101-112 (KKSKKSEKSKKK) the composition is skewed to basic residues. Positions 113-173 (KTEEKVMSED…KEKSKDETVP (61 aa)) are enriched in basic and acidic residues. Residues 199–210 (ETDEFPTIDEDA) are compositionally biased toward acidic residues. The segment covering 211–230 (EKTKKTEKKDVKTEGTLKKN) has biased composition (basic and acidic residues).

Its subcellular location is the membrane. This is an uncharacterized protein from Caenorhabditis elegans.